Here is a 1670-residue protein sequence, read N- to C-terminus: Collagen alpha-3(IV) chain (1670 aa).

The first 28 residues, 1–28 (MSARTAPRPQVLLLPLLLVLLAAAPAAS), serve as a signal peptide directing secretion. Positions 29-42 (KGCVCKDKGQCFCD) are 7S domain. The segment at 43 to 1438 (GAKGEKGEKG…KGKRGDSGSP (1396 aa)) is triple-helical region. Disordered stretches follow at residues 49–78 (GEKG…QGPK), 167–469 (LDAK…DGPK), and 502–1442 (GRQG…ATWT). Positions 176–200 (PGAPGPQGLPGPPGFPGPVGPPGPP) are enriched in pro residues. Residues 202-212 (FFGFPGAMGPR) are compositionally biased toward low complexity. A compositionally biased stretch (basic and acidic residues) spans 217 to 231 (HMGERVIGHKGERGV). Positions 242–251 (GTVIVTLTGP) are enriched in low complexity. N-linked (GlcNAc...) asparagine glycosylation is present at N253. Positions 253-266 (NRTDLKGEKGDKGA) are enriched in basic and acidic residues. The segment covering 382–394 (SPGSSRPGLRGAP) has biased composition (low complexity). Residues 402–411 (SKGERGRPGK) show a composition bias toward basic and acidic residues. Positions 415 to 428 (GTPGSPGCAGSPGL) are enriched in low complexity. Pro residues-rich tracts occupy residues 429-438 (PGSPGPPGPP), 598-618 (PGDP…PPGY), and 654-675 (VPGP…PPGI). Residues 791–793 (RGD) carry the Cell attachment site motif. The span at 900–909 (IGPPGPPGNP) shows a compositional bias: pro residues. A compositionally biased stretch (low complexity) spans 974–987 (VPGMPGLKGLKGLP). A Cell attachment site motif is present at residues 996–998 (RGD). Low complexity-rich tracts occupy residues 1013 to 1025 (IPGS…MPGS), 1094 to 1105 (LGPAGPEGAPGS), and 1118 to 1133 (HGDL…LGPP). Residues 1135-1148 (IRGPPGLPGFPGSP) show a composition bias toward pro residues. Residues 1154 to 1156 (RGD) carry the Cell attachment site motif. Low complexity-rich tracts occupy residues 1230 to 1250 (PGAI…RGSP) and 1290 to 1299 (PPGRLGAPGT). Positions 1306-1308 (RGD) match the Cell attachment site motif. Residues 1332–1341 (PPGPIGPKGP) are compositionally biased toward pro residues. 2 consecutive short sequence motifs (cell attachment site) follow at residues 1345–1347 (RGD) and 1432–1434 (RGD). The tract at residues 1427–1444 (GLKGKRGDSGSPATWTTR) is epitope recognized by Goodpasture antibodies. The 225-residue stretch at 1445-1669 (GFVFTRHSQT…SRCQVCMKKR (225 aa)) folds into the Collagen IV NC1 domain. Cystine bridges form between C1460–C1551, C1493–C1548, C1505–C1511, C1570–C1665, C1604–C1662, and C1616–C1622. Residues 1479-1557 (NQRAHGQDLG…CTVCEGPAIA (79 aa)) are required for the anti-angiogenic activity of tumstatin. An S-Lysyl-methionine sulfilimine (Met-Lys) (interchain with K-1651) cross-link involves residue M1533. The tract at residues 1610–1628 (ASPFLECHGRGTCNYYSNS) is required for the anti-tumor cell activity of tumstatin. Residue K1651 forms an S-Lysyl-methionine sulfilimine (Lys-Met) (interchain with M-1533) linkage.

The protein belongs to the type IV collagen family. In terms of assembly, there are six type IV collagen isoforms, alpha 1(IV)-alpha 6(IV), each of which can form a triple helix structure with 2 other chains to generate type IV collagen network. The alpha 3(IV) chain forms a triple helical protomer with alpha 4(IV) and alpha 5(IV); this triple helical structure dimerizes through NC1-NC1 domain interactions such that the alpha 3(IV), alpha 4(IV) and alpha 5(IV) chains of one protomer connect with the alpha 5(IV), alpha 4(IV) and alpha 3(IV) chains of the opposite promoter, respectively. Interacts with ITGB3. Associates with LAMB2 at the neuromuscular junction and in GBM. In terms of processing, prolines at the third position of the tripeptide repeating unit (G-X-Y) are hydroxylated in some or all of the chains. Post-translationally, isoform 2 contains an additional N-linked glycosylation site. Type IV collagens contain numerous cysteine residues which are involved in inter- and intramolecular disulfide bonding. 12 of these, located in the NC1 domain, are conserved in all known type IV collagens. In terms of processing, the trimeric structure of the NC1 domains is stabilized by covalent bonds between Lys and Met residues. Post-translationally, phosphorylated. Thought to be phosphorylated by CERT, but CERT does not have kinase activity. Alpha 3 and alpha 4 type IV collagens are colocalized and present in kidney, eye, basement membranes of lens capsule, cochlea, lung, skeletal muscle, aorta, synaptic fibers, fetal kidney and fetal lung. PubMed:8083201 reports similar levels of expression of alpha 3 and alpha 4 type IV collagens in kidney, but PubMed:7523402 reports that in kidney levels of alpha 3 type IV collagen are significantly lower than those of alpha 4 type IV collagen. According to PubMed:8083201, alpha 3 type IV collagen is not detected in heart, brain, placenta, liver, pancreas, extrasynaptic muscle fibers, endoneurial and perineurial nerves, fetal brain, fetal heart and fetal liver. According to PubMed:7523402, alpha 3 type IV collagen is strongly expressed in pancreas, neuroretina and calvaria and not expressed in adrenal, ileum and skin. Isoform 1 and isoform 3 are strongly expressed in kidney, lung, suprarenal capsule, muscle and spleen, in each of these tissues isoform 1 is more abundant than isoform 3. Isoform 1 and isoform 3 are expressed at low levels in artery, fat, pericardium and peripherical nerve, but not in placenta, mesangium, skin, pleura and cultured umbilical endothelial cells.

It localises to the secreted. It is found in the extracellular space. The protein localises to the extracellular matrix. The protein resides in the basement membrane. Functionally, type IV collagen is the major structural component of glomerular basement membranes (GBM), forming a 'chicken-wire' meshwork together with laminins, proteoglycans and entactin/nidogen. In terms of biological role, tumstatin, a cleavage fragment corresponding to the collagen alpha 3(IV) NC1 domain, possesses both anti-angiogenic and anti-tumor cell activity; these two anti-tumor properties may be regulated via RGD-independent ITGB3-mediated mechanisms. The chain is Collagen alpha-3(IV) chain (COL4A3) from Homo sapiens (Human).